An 836-amino-acid chain; its full sequence is Translation initiation factor IF-2 (836 aa).

Basic residues predominate over residues 1–17 (MLRLMRQKKLSIQRRTK). Disordered regions lie at residues 1-43 (MLRL…RTVK) and 83-240 (AAKK…KGAA). Over residues 18–27 (TTVSSTTTGG) the composition is skewed to low complexity. Residues 83 to 153 (AAKKEADEKV…AAEEAKRYAE (71 aa)) show a composition bias toward basic and acidic residues. Over residues 154–167 (ADDSDNESSSEDYS) the composition is skewed to acidic residues. Residues 192–202 (RGKNKVAKAKK) show a composition bias toward basic residues. A compositionally biased stretch (basic and acidic residues) spans 203 to 229 (GGRDDENSKNSKNERESNRKNQKDAKF). The 171-residue stretch at 335 to 505 (TRAPVVTIMG…LLQSEVLELT (171 aa)) folds into the tr-type G domain. The G1 stretch occupies residues 344 to 351 (GHVDHGKT). A GTP-binding site is contributed by 344–351 (GHVDHGKT). The tract at residues 369–373 (GITQH) is G2. The tract at residues 391-394 (DTPG) is G3. GTP is bound by residues 391–395 (DTPGH) and 445–448 (NKID). The tract at residues 445–448 (NKID) is G4. The G5 stretch occupies residues 481–483 (SAK).

This sequence belongs to the TRAFAC class translation factor GTPase superfamily. Classic translation factor GTPase family. IF-2 subfamily.

Its subcellular location is the cytoplasm. Its function is as follows. One of the essential components for the initiation of protein synthesis. Protects formylmethionyl-tRNA from spontaneous hydrolysis and promotes its binding to the 30S ribosomal subunits. Also involved in the hydrolysis of GTP during the formation of the 70S ribosomal complex. In Haemophilus influenzae (strain PittEE), this protein is Translation initiation factor IF-2.